Consider the following 232-residue polypeptide: Thiamine import ATP-binding protein ThiQ (232 aa).

The 229-residue stretch at 2–230 (LKLTDITWLY…KASASALLGI (229 aa)) folds into the ABC transporter domain. 32-39 (GPSGAGKS) contacts ATP.

This sequence belongs to the ABC transporter superfamily. Thiamine importer (TC 3.A.1.19.1) family. In terms of assembly, the complex is composed of two ATP-binding proteins (ThiQ), two transmembrane proteins (ThiP) and a solute-binding protein (ThiB).

The protein localises to the cell inner membrane. The catalysed reaction is thiamine(out) + ATP + H2O = thiamine(in) + ADP + phosphate + H(+). Its function is as follows. Part of the ABC transporter complex ThiBPQ involved in thiamine import. Responsible for energy coupling to the transport system. This Escherichia coli (strain K12) protein is Thiamine import ATP-binding protein ThiQ.